A 237-amino-acid polypeptide reads, in one-letter code: Ribosomal RNA small subunit methyltransferase G (237 aa).

Residues Gly-78, Phe-83, 129–130, and Arg-148 contribute to the S-adenosyl-L-methionine site; that span reads AE. The interval 216-237 is disordered; the sequence is SKKKETPNKYPRKAGTPNKKPL.

It belongs to the methyltransferase superfamily. RNA methyltransferase RsmG family.

The protein resides in the cytoplasm. Functionally, specifically methylates the N7 position of a guanine in 16S rRNA. This Streptococcus agalactiae serotype III (strain NEM316) protein is Ribosomal RNA small subunit methyltransferase G.